A 148-amino-acid polypeptide reads, in one-letter code: STSTSTSDYSAADRAELAALSKVLAQNAEAFGAEALARMFTVYAATKSYFKDYKDFTAAAPSIKAHGAKVVTALAKACDHLDDLKTHLHKLATFHGSELKVDPANFQYLSYCLEVALAVHLTEFSPETHCALDKFLTNVCHELSSRYR.

At Ser-1 the chain carries N-acetylserine. Residues 8–148 (DYSAADRAEL…VCHELSSRYR (141 aa)) form the Globin domain. O2 is bound at residue His-66. His-95 provides a ligand contact to heme b.

The protein belongs to the globin family. As to quaternary structure, heterotetramer of two alpha chains and two beta chains. In terms of tissue distribution, red blood cells.

Involved in oxygen transport from the lung to the various peripheral tissues. The chain is Hemoglobin subunit alpha (HBA) from Heterodontus portusjacksoni (Port Jackson shark).